We begin with the raw amino-acid sequence, 409 residues long: TAR DNA-binding protein 43 (409 aa).

2 RRM domains span residues 105–200 and 191–262; these read SDLI…RCTE and RKVF…TAEP. 2 disordered regions span residues 260–302 and 341–409; these read AEPK…NQGG and SQQN…GWGM. The segment covering 261 to 274 has biased composition (basic and acidic residues); that stretch reads EPKHNNNRQLERGG. The span at 281 to 292 shows a compositional bias: polar residues; the sequence is FGNQGYPNSRPS. 2 stretches are compositionally biased toward low complexity: residues 341–387 and 395–409; these read SQQN…PNAG and GFSS…GWGM.

Homodimer.

The protein resides in the nucleus. The protein localises to the cytoplasm. It is found in the stress granule. Its subcellular location is the mitochondrion. In terms of biological role, probably involved in transcriptional repression. May play a role in the maintenance of the circadian clock periodicity. This chain is TAR DNA-binding protein 43 (tardbp), found in Xenopus tropicalis (Western clawed frog).